The following is a 274-amino-acid chain: uncharacterized protein (274 aa).

Positions 1–20 (MSLEKSLDEIINERTNGFDH) are enriched in basic and acidic residues. Disordered stretches follow at residues 1–63 (MSLE…HDLD), 148–217 (NLKG…EDLD), and 230–274 (ASTV…MEAV). Residues 21–44 (KHSRRRGSQNRISKKSRLTYKFKR) are compositionally biased toward basic residues. Residues 45–63 (ASKEHNSSPDDGPWQHDLD) are compositionally biased toward basic and acidic residues. Residues 85–161 (FGVRVENLHY…SEIQISKKSP (77 aa)) enclose the RRM domain. Positions 148–160 (NLKGSEIQISKKS) are enriched in polar residues. Composition is skewed to low complexity over residues 181-190 (SSRSNRGFNR) and 200-211 (RSSSKKSSNNSI). Positions 230-245 (ASTVSSHSSQDFTPSI) are enriched in polar residues. Acidic residues predominate over residues 263–274 (LTEEMDLQMEAV).

This is an uncharacterized protein from Schizosaccharomyces pombe (strain 972 / ATCC 24843) (Fission yeast).